The sequence spans 80 residues: Putative membrane protein insertion efficiency factor (80 aa).

Positions 61 to 80 (KTGKDPIPDHFSLKRNQEGE) are disordered. The segment covering 62 to 80 (TGKDPIPDHFSLKRNQEGE) has biased composition (basic and acidic residues).

The protein belongs to the UPF0161 family.

It localises to the cell membrane. Functionally, could be involved in insertion of integral membrane proteins into the membrane. This chain is Putative membrane protein insertion efficiency factor, found in Streptococcus pneumoniae (strain CGSP14).